The following is a 148-amino-acid chain: SsrA-binding protein (148 aa).

The disordered stretch occupies residues 124 to 148 (QFDKRETEKDRDWQREKARLMREKA).

This sequence belongs to the SmpB family.

The protein localises to the cytoplasm. Its function is as follows. Required for rescue of stalled ribosomes mediated by trans-translation. Binds to transfer-messenger RNA (tmRNA), required for stable association of tmRNA with ribosomes. tmRNA and SmpB together mimic tRNA shape, replacing the anticodon stem-loop with SmpB. tmRNA is encoded by the ssrA gene; the 2 termini fold to resemble tRNA(Ala) and it encodes a 'tag peptide', a short internal open reading frame. During trans-translation Ala-aminoacylated tmRNA acts like a tRNA, entering the A-site of stalled ribosomes, displacing the stalled mRNA. The ribosome then switches to translate the ORF on the tmRNA; the nascent peptide is terminated with the 'tag peptide' encoded by the tmRNA and targeted for degradation. The ribosome is freed to recommence translation, which seems to be the essential function of trans-translation. The polypeptide is SsrA-binding protein (Ralstonia pickettii (strain 12J)).